A 230-amino-acid chain; its full sequence is Spliceosome-associated protein CWC15 homolog (230 aa).

2 disordered regions span residues 1-157 and 164-183; these read MTTA…EEKQ and AGNP…GGDF. Positions 25-34 are enriched in polar residues; it reads KLSNQYSSKD. 2 coiled-coil regions span residues 47–82 and 119–164; these read GQET…SASS and DSDE…NILA. Over residues 52 to 78 the composition is skewed to basic and acidic residues; it reads ADLRKKDLRRELEDKERNAIREKRARD. Residues 104–125 show a composition bias toward acidic residues; the sequence is DADEAVDELNSSDDDDSDEDDT. The span at 131–157 shows a compositional bias: basic and acidic residues; sequence ELEKIKKERAEEKAARDEEIKEKEEKQ.

It belongs to the CWC15 family. Component of spliceosomal complex.

It is found in the nucleus. Component of a spliceosomal complex that is required for activating pre-mRNA splicing. This chain is Spliceosome-associated protein CWC15 homolog, found in Caenorhabditis elegans.